We begin with the raw amino-acid sequence, 521 residues long: Glucosidase 2 subunit beta (521 aa).

The first 14 residues, 1-14 (MLLLLLLLLPLCWA), serve as a signal peptide directing secretion. Serine 24 bears the Phosphoserine mark. LDL-receptor class A domains follow at residues 37-71 (FTCL…AACP) and 69-113 (ACPN…TVCE). Intrachain disulfides connect cysteine 39–cysteine 58 and cysteine 56–cysteine 70. Aspartate 49 is a substrate binding site. Residues glutamine 50, aspartate 53, tyrosine 55, aspartate 57, aspartate 63, and glutamate 64 each contribute to the Ca(2+) site. Residue aspartate 53 participates in substrate binding. An N-linked (GlcNAc...) asparagine glycan is attached at asparagine 72. Intrachain disulfides connect cysteine 77/cysteine 99, cysteine 97/cysteine 112, and cysteine 100/cysteine 116. The residue at position 89 (serine 89) is a Phosphoserine; by PKC. The Ca(2+) site is built by arginine 91, aspartate 94, valine 96, aspartate 98, aspartate 104, and glutamate 105. Lysine 166 carries the N6-succinyllysine modification. Phosphoserine is present on serine 168. EF-hand domains follow at residues 209–244 (REQE…DTDG) and 245–290 (DGAL…TDIP). The Ca(2+) site is built by aspartate 222, asparagine 224, aspartate 226, methionine 228, and glutamate 233. Disordered stretches follow at residues 226–267 (DGMV…DTTS) and 280–350 (YRSE…EKMP). 2 stretches are compositionally biased toward acidic residues: residues 241–253 (DTDG…EEEA) and 308–331 (TEEE…EEEA). Pro residues predominate over residues 332 to 343 (PPPLQPPQPPSP). A phosphoserine; by PKC mark is found at serine 376 and serine 383. Positions 406–507 (SQCYELTTNE…ELMTPAACPE (102 aa)) constitute an MRH domain. A disulfide bond links cysteine 408 and cysteine 421. Serine 427 carries the phosphoserine; by PKC modification. Intrachain disulfides connect cysteine 464/cysteine 493 and cysteine 478/cysteine 505. An N-linked (GlcNAc...) asparagine glycan is attached at asparagine 469. Positions 518 to 521 (HDEL) match the Prevents secretion from ER motif.

In terms of assembly, heterodimer of a catalytic alpha subunit (GANAB) and a beta subunit (PRKCSH). Binds glycosylated PTPRC. In terms of tissue distribution, expressed in kidney (at protein level).

The protein resides in the endoplasmic reticulum. The protein operates within glycan metabolism; N-glycan metabolism. Its function is as follows. Regulatory subunit of glucosidase II that cleaves sequentially the 2 innermost alpha-1,3-linked glucose residues from the Glc(2)Man(9)GlcNAc(2) oligosaccharide precursor of immature glycoproteins. Required for efficient PKD1/Polycystin-1 biogenesis and trafficking to the plasma membrane of the primary cilia. The sequence is that of Glucosidase 2 subunit beta from Mus musculus (Mouse).